The primary structure comprises 227 residues: E3 ubiquitin-protein ligase ZNRF1 (227 aa).

The interval 1 to 38 (MGGKQSTAARSRGPFPGVSTDDSAVPPPGGAPHFGHYR) is disordered. Glycine 2 is lipidated: N-myristoyl glycine. Residues 2–10 (GGKQSTAAR) form a required for endosomal and lysosomal localization and myristoylation region. Phosphoserine is present on residues serine 50, serine 52, and serine 53. A disordered region spans residues 77-105 (RGAGDAERAPGSGGSASDSTYAHGNGYQE). Tyrosine 103 bears the Phosphotyrosine mark. A Phosphoserine modification is found at serine 123. Residues 184–225 (CVICLEELLQGDTIARLPCLCIYHKSCIDSWFEVNRSCPEHP) form an RING-type; atypical zinc finger.

In terms of assembly, interacts with AKT1, GLUL and TUBB2A. Interacts with ZNRF2. Interacts (via its RING domain) with UBE2N. Interacts (when phosphorylated) with YWHAE. N-myristoylation targets ZNRF1 to intracellular membranes. In terms of processing, phosphorylated by SRC at Tyr-103; leading to 'Lys-63'-linked ubiquitination of TLR3, lysosomal trafficking and degradation.

It localises to the endosome. The protein resides in the lysosome. Its subcellular location is the membrane. It is found in the cytoplasmic vesicle. The protein localises to the secretory vesicle. It localises to the synaptic vesicle membrane. It catalyses the reaction S-ubiquitinyl-[E2 ubiquitin-conjugating enzyme]-L-cysteine + [acceptor protein]-L-lysine = [E2 ubiquitin-conjugating enzyme]-L-cysteine + N(6)-ubiquitinyl-[acceptor protein]-L-lysine.. The protein operates within protein modification; protein ubiquitination. E3 ubiquitin-protein ligase that plays a role in different processes including cell differentiation, receptor recycling or regulation of inflammation. Mediates the ubiquitination of AKT1 and GLUL, thereby playing a role in neuron cells differentiation. Plays a role in the establishment and maintenance of neuronal transmission and plasticity. Regulates Schwann cells differentiation by mediating ubiquitination of GLUL. Promotes neurodegeneration by mediating 'Lys-48'-linked polyubiquitination and subsequent degradation of AKT1 in axons: degradation of AKT1 prevents AKT1-mediated phosphorylation of GSK3B, leading to GSK3B activation and phosphorylation of DPYSL2/CRMP2 followed by destabilization of microtubule assembly in axons. Ubiquitinates the Na(+)/K(+) ATPase alpha-1 subunit/ATP1A1 and thereby influences its endocytosis and/or degradation. Controls ligand-induced EGFR signaling via mediating receptor ubiquitination and recruitment of the ESCRT machinery. Acts as a negative feedback mechanism controlling TLR3 trafficking by mediating TLR3 'Lys-63'-linked polyubiquitination to reduce type I IFN production. Modulates inflammation by promoting caveolin-1/CAV1 ubiquitination and degradation to regulate TLR4-activated immune response. In Bos taurus (Bovine), this protein is E3 ubiquitin-protein ligase ZNRF1 (ZNRF1).